A 615-amino-acid polypeptide reads, in one-letter code: 1-deoxy-D-xylulose-5-phosphate synthase (615 aa).

Thiamine diphosphate contacts are provided by residues histidine 72 and 111-113 (GHS). Aspartate 142 lines the Mg(2+) pocket. Thiamine diphosphate contacts are provided by residues 143–144 (GA), asparagine 171, tyrosine 278, and glutamate 360. Asparagine 171 contributes to the Mg(2+) binding site.

The protein belongs to the transketolase family. DXPS subfamily. In terms of assembly, homodimer. Requires Mg(2+) as cofactor. Thiamine diphosphate serves as cofactor.

The enzyme catalyses D-glyceraldehyde 3-phosphate + pyruvate + H(+) = 1-deoxy-D-xylulose 5-phosphate + CO2. Its pathway is metabolic intermediate biosynthesis; 1-deoxy-D-xylulose 5-phosphate biosynthesis; 1-deoxy-D-xylulose 5-phosphate from D-glyceraldehyde 3-phosphate and pyruvate: step 1/1. Functionally, catalyzes the acyloin condensation reaction between C atoms 2 and 3 of pyruvate and glyceraldehyde 3-phosphate to yield 1-deoxy-D-xylulose-5-phosphate (DXP). This chain is 1-deoxy-D-xylulose-5-phosphate synthase, found in Campylobacter jejuni subsp. jejuni serotype O:6 (strain 81116 / NCTC 11828).